Consider the following 547-residue polypeptide: Membrane protein insertase YidC (547 aa).

The helical transmembrane segment at 8 to 28 threads the bilayer; it reads LRLILAIALSFLFIALYSYFF. Residues 37-50 are compositionally biased toward low complexity; that stretch reads QTTKQETTNNHTAT. Residues 37–62 form a disordered region; sequence QTTKQETTNNHTATSPNAPNAQHFST. Polar residues predominate over residues 51–62; the sequence is SPNAPNAQHFST. The next 5 membrane-spanning stretches (helical) occupy residues 325–345, 348–368, 414–434, 449–469, and 495–515; these read VIEY…LDYL, FVGN…IILY, GANP…FFAI, WILW…PLLM, and LLPL…VLYW.

It belongs to the OXA1/ALB3/YidC family. Type 1 subfamily. In terms of assembly, interacts with the Sec translocase complex via SecD. Specifically interacts with transmembrane segments of nascent integral membrane proteins during membrane integration.

The protein localises to the cell inner membrane. In terms of biological role, required for the insertion and/or proper folding and/or complex formation of integral membrane proteins into the membrane. Involved in integration of membrane proteins that insert both dependently and independently of the Sec translocase complex, as well as at least some lipoproteins. Aids folding of multispanning membrane proteins. The polypeptide is Membrane protein insertase YidC (Helicobacter pylori (strain ATCC 700392 / 26695) (Campylobacter pylori)).